Here is a 76-residue protein sequence, read N- to C-terminus: MENKLSFEEAISQLEHLVSKLEQGDVPLEEAISYFKEGMELSKLCDEKLKDVQEQMAVILGEDGELKPFTALGDEA.

Belongs to the XseB family. Heterooligomer composed of large and small subunits.

The protein localises to the cytoplasm. It catalyses the reaction Exonucleolytic cleavage in either 5'- to 3'- or 3'- to 5'-direction to yield nucleoside 5'-phosphates.. In terms of biological role, bidirectionally degrades single-stranded DNA into large acid-insoluble oligonucleotides, which are then degraded further into small acid-soluble oligonucleotides. The chain is Exodeoxyribonuclease 7 small subunit from Bacillus mycoides (strain KBAB4) (Bacillus weihenstephanensis).